The chain runs to 246 residues: MSGAGEALAPGPVGPQRVAEAGGGQLGSTAQGKCDKDNTEKDITQATNSHFTHGEMQDQSIWGNPSDGELIRTQPQRLPQLQTSAQVPSGEEIGKIKNGHTGLSNGNGIHHGAKHGSADNRKLSAPVSQKMHRKIQSSLSVNSDISKKSKVNAVFSQKTGSSPEDCCVHCILACLFCEFLTLCNIVLGQASCGICTSEACCCCCGDEMGDDCNCPCDMDCGIMDACCESSDCLEICMECCGICFPS.

The interval 1–71 (MSGAGEALAP…WGNPSDGELI (71 aa)) is disordered. Positions 33 to 43 (KCDKDNTEKDI) are enriched in basic and acidic residues. The span at 44-63 (TQATNSHFTHGEMQDQSIWG) shows a compositional bias: polar residues. Positions 74–246 (QPQRLPQLQT…MECCGICFPS (173 aa)) constitute an MDFI domain. Phosphoserine occurs at positions 128, 140, and 143.

It belongs to the MDFI family. Interacts with HAND1; the interaction sequesters HAND1 into the nucleolus and inhibits its activity. Interacts (via C-terminus) with ZIC2. Interacts (via C-terminus) with AXIN1, the histidine-rich region of CCNT1/cyclin-T and weakly with LEF1. Interacts with CCNT2. Interacts with GATA2. Interacts (via C-terminus) with Piezo channel composed of PIEZO1 or PIEZO2; the interaction prolongs Piezo channel inactivation. As to quaternary structure, (Microbial infection) Interacts (via C-terminus) with HIV-1 Tat and Rev. Post-translationally, palmitoylated. In terms of tissue distribution, expressed in lymphatic tissues. Detected in the spleen, thymus, peripheral blood leukocytes as well as prostate, uterus and small intestine. Expressed in lymphatic endothelial cells.

Its subcellular location is the nucleus. It localises to the nucleolus. The protein resides in the cytoplasm. The protein localises to the secreted. In terms of biological role, required to control the activity of various transcription factors through their sequestration in the cytoplasm. Retains nuclear Zic proteins ZIC1, ZIC2 and ZIC3 in the cytoplasm and inhibits their transcriptional activation. Modulates the expression from cellular promoters. Binds to the axin complex, resulting in an increase in the level of free beta-catenin. Affects axin regulation of the WNT and JNK signaling pathways. Involved in the development of lymphatic vessel valves. Required to promote lymphatic endothelial cell migration, in a process that involves down-regulation of integrin beta 1 activation and control of cell adhesion to the extracellular matrix. Regulates the activity of mechanosensitive Piezo channel. (Microbial infection) Modulates the expression from viral promoters. Down-regulates Tat-dependent transcription of the human immunodeficiency virus type 1 (HIV-1) LTR by interacting with HIV-1 Tat and Rev and impairing their nuclear import, probably by rendering the NLS domains inaccessible to importin-beta. Also stimulates activation of human T-cell leukemia virus type I (HTLV-I) LTR. This Homo sapiens (Human) protein is MyoD family inhibitor domain-containing protein.